Here is a 416-residue protein sequence, read N- to C-terminus: Choline/ethanolaminephosphotransferase 1 (416 aa).

The segment at 1 to 20 (MSGHRSTRKRCGDSHPESPV) is disordered. Residue Ser18 is modified to Phosphoserine. Position 40 is a phosphothreonine (Thr40). Asn86 serves as a coordination point for CDP-choline. 2 helical membrane passes run 89 to 108 (TIIG…FYCP) and 116 to 133 (LWAY…QSLD). Mg(2+) is bound at residue Asp133. Asn144 carries N-linked (GlcNAc...) asparagine glycosylation. Residue Glu151 participates in CDP-choline binding. Mg(2+) is bound at residue Asp154. Catalysis depends on His155, which acts as the Proton acceptor. Transmembrane regions (helical) follow at residues 156-176 (GCDS…VQLG), 180-199 (DWMF…AHWQ), 210-230 (IIDV…AVIG), 246-267 (MKIF…NYFR), 286-306 (VLSP…IYKK), 315-334 (HPCL…TNKL), 349-363 (TAFI…DQYF), and 368-388 (DEYI…IRYC). Mg(2+) is bound at residue Asp158.

It belongs to the CDP-alcohol phosphatidyltransferase class-I family. As to quaternary structure, homodimer. The cofactor is Mg(2+). Requires Mn(2+) as cofactor. As to expression, ubiquitously expressed.

It is found in the endoplasmic reticulum membrane. Its subcellular location is the nucleus membrane. The enzyme catalyses CDP-ethanolamine + a 1,2-diacyl-sn-glycerol = a 1,2-diacyl-sn-glycero-3-phosphoethanolamine + CMP + H(+). It catalyses the reaction CDP-choline + a 1,2-diacyl-sn-glycerol = a 1,2-diacyl-sn-glycero-3-phosphocholine + CMP + H(+). It carries out the reaction 1-O-alkyl-2-acyl-sn-glycerol + CDP-choline = a 1-O-alkyl-2-acyl-sn-glycero-3-phosphocholine + CMP + H(+). The catalysed reaction is a 1-O-(1Z-alkenyl)-2-acyl-sn-glycerol + CDP-choline = a 1-O-(1Z-alkenyl)-2-acyl-sn-glycero-3-phosphocholine + CMP + H(+). The enzyme catalyses 1,2-dioctanoyl-sn-glycerol + CDP-choline = 1,2-dioctanoyl-sn-glycero-3-phosphocholine + CMP + H(+). It catalyses the reaction 1,2-didecanoyl-sn-glycerol + CDP-choline = 1,2-didecanoyl-sn-glycero-3-phosphocholine + CMP + H(+). It carries out the reaction CDP-choline + 1,2-di-(9Z-octadecenoyl)-sn-glycerol = 1,2-di-(9Z-octadecenoyl)-sn-glycero-3-phosphocholine + CMP + H(+). The catalysed reaction is 1-hexadecanoyl-2-(9Z-octadecenoyl)-sn-glycerol + CDP-choline = 1-hexadecanoyl-2-(9Z-octadecenoyl)-sn-glycero-3-phosphocholine + CMP + H(+). The enzyme catalyses CDP-ethanolamine + 1,2-di-(9Z-octadecenoyl)-sn-glycerol = 1,2-di-(9Z-octadecenoyl)-sn-glycero-3-phosphoethanolamine + CMP + H(+). It catalyses the reaction 1-hexadecanoyl-2-(9Z-octadecenoyl)-sn-glycerol + CDP-ethanolamine = 1-hexadecanoyl-2-(9Z-octadecenoyl)-sn-glycero-3-phosphoethanolamine + CMP + H(+). It carries out the reaction 1-hexadecanoyl-2-(4Z,7Z,10Z,13Z,16Z,19Z-docosahexaenoyl)-sn-glycerol + CDP-choline = 1-hexadecanoyl-2-(4Z,7Z,10Z,13Z,16Z,19Z-docosahexaenoyl)-sn-glycero-3-phosphocholine + CMP + H(+). The catalysed reaction is 1,2-di-(9Z-hexadecenoyl)-sn-glycerol + CDP-choline = 1,2-di-(9Z-hexadecenoyl)-sn-glycero-3-phosphocholine + CMP + H(+). The enzyme catalyses 1,2-di-(9Z-hexadecenoyl)-sn-glycerol + CDP-ethanolamine = 1,2-di-(9Z-hexadecenoyl)-sn-glycero-3-phosphoethanolamine + CMP + H(+). It catalyses the reaction 1-O-hexadecyl-2-acetyl-sn-glycerol + CDP-choline = 1-O-hexadecyl-2-acetyl-sn-glycero-3-phosphocholine + CMP + H(+). It carries out the reaction 1-O-hexadecyl-2-(5Z,8Z,11Z,14Z-eicosatetraenoyl)-sn-glycerol + CDP-choline = 1-O-hexadecyl-2-(5Z,8Z,11Z,14Z)-eicosatetraenoyl-sn-glycero-3-phosphocholine + CMP + H(+). It participates in phospholipid metabolism; phosphatidylethanolamine biosynthesis; phosphatidylethanolamine from ethanolamine: step 3/3. It functions in the pathway phospholipid metabolism; phosphatidylcholine biosynthesis; phosphatidylcholine from phosphocholine: step 2/2. Catalyzes both phosphatidylcholine and phosphatidylethanolamine biosynthesis from CDP-choline and CDP-ethanolamine, respectively. Involved in protein-dependent process of phospholipid transport to distribute phosphatidyl choline to the lumenal surface. Has a higher cholinephosphotransferase activity than ethanolaminephosphotransferase activity. The sequence is that of Choline/ethanolaminephosphotransferase 1 from Homo sapiens (Human).